Reading from the N-terminus, the 569-residue chain is Phenylalanine ammonia-lyase (569 aa).

The Proton donor/acceptor role is filled by Tyr78. Positions Ala167–Gly169 form a cross-link, 5-imidazolinone (Ala-Gly). Position 168 is a 2,3-didehydroalanine (Ser) (Ser168). (E)-cinnamate-binding residues include Asn223, Gln311, Arg317, Asn347, Lys419, Glu448, and Asn451.

The protein belongs to the PAL/histidase family. In terms of assembly, homotetramer. Post-translationally, contains an active site 4-methylidene-imidazol-5-one (MIO), which is formed autocatalytically by cyclization and dehydration of residues Ala-Ser-Gly.

Its subcellular location is the cytoplasm. The catalysed reaction is L-phenylalanine = (E)-cinnamate + NH4(+). It functions in the pathway phenylpropanoid metabolism; trans-cinnamate biosynthesis; trans-cinnamate from L-phenylalanine: step 1/1. In terms of biological role, catalyzes the non-oxidative deamination of L-phenylalanine to form trans-cinnamic acid, the first step in the phenylpropanoid pathway. The protein is Phenylalanine ammonia-lyase of Nostoc punctiforme (strain ATCC 29133 / PCC 73102).